A 185-amino-acid polypeptide reads, in one-letter code: Homeobox expressed in ES cells 1 (185 aa).

The segment at residues 108–167 is a DNA-binding region (homeobox); that stretch reads GRRPRTAFTQNQIEVLENVFRVNCYPGIDIREDLAQKLNLEEDRIQIWFQNRRAKLKRSH.

Belongs to the ANF homeobox family. In terms of assembly, can form heterodimers with PROP1 in binding to DNA. Interacts with TLE1.

Its subcellular location is the nucleus. Its function is as follows. Required for the normal development of the forebrain, eyes and other anterior structures such as the olfactory placodes and pituitary gland. Possible transcriptional repressor. Binds to the palindromic PIII sequence, 5'-AGCTTGAGTCTAATTGAATTAACTGTAC-3'. HESX1 and PROP1 bind as heterodimers on this palindromic site, and, in vitro, HESX1 can antagonize PROP1 activation. This chain is Homeobox expressed in ES cells 1 (HESX1), found in Pan troglodytes (Chimpanzee).